Reading from the N-terminus, the 400-residue chain is MSSKLVLVLNCGSSSLKFAIIDATNGEEHISGLAECFHLPEARIKWKVDGGKQEAALGAGAAHSEALNFIVNTILAQKPALSAQLTAIGHRIVHGGEKFTSSVIVTEDVIQGIKDSIPFAPLHNPAHLIGIAEALKSFPNLADKNVAVFDTAFHQTMPEESYLYALPYSLYKDHGIRRYGAHGTSHFYVSQEAAKILNKPLEELNVITCHLGNGGSVTAVRNGKCVDTSMGLTPLEGLVMGTRSGDLDPAIIFHLHDAMGMSVDQINTLLTKESGLLGLTEVTSDCRYVEDNYATKADAKRAMDVFCHRLAKYIGSYTALMDGRLDAVVFTGGIGENAAMVRELTLDKLGLLGFEIDHERNMAARFGKSGTITKDSSRLALVIPTNEELVIAQDAARLTA.

Residue asparagine 10 coordinates Mg(2+). Lysine 17 contributes to the ATP binding site. Arginine 91 serves as a coordination point for substrate. Aspartate 150 functions as the Proton donor/acceptor in the catalytic mechanism. ATP is bound by residues 210–214 (HLGNG), 285–287 (DCR), and 333–337 (GIGEN). Glutamate 387 serves as a coordination point for Mg(2+).

Belongs to the acetokinase family. Homodimer. Requires Mg(2+) as cofactor. The cofactor is Mn(2+).

Its subcellular location is the cytoplasm. It catalyses the reaction acetate + ATP = acetyl phosphate + ADP. It participates in metabolic intermediate biosynthesis; acetyl-CoA biosynthesis; acetyl-CoA from acetate: step 1/2. In terms of biological role, catalyzes the formation of acetyl phosphate from acetate and ATP. Can also catalyze the reverse reaction. The chain is Acetate kinase from Yersinia pestis bv. Antiqua (strain Antiqua).